A 185-amino-acid polypeptide reads, in one-letter code: Ribosome-recycling factor (185 aa).

This sequence belongs to the RRF family.

The protein localises to the cytoplasm. Its function is as follows. Responsible for the release of ribosomes from messenger RNA at the termination of protein biosynthesis. May increase the efficiency of translation by recycling ribosomes from one round of translation to another. The protein is Ribosome-recycling factor of Thermomicrobium roseum (strain ATCC 27502 / DSM 5159 / P-2).